Reading from the N-terminus, the 339-residue chain is DNA-directed RNA polymerase subunit alpha (339 aa).

The interval 1–233 (MVREEVAGST…DLFLPFLHAE (233 aa)) is alpha N-terminal domain (alpha-NTD). The interval 266–339 (GIPLNCIFID…IDLLKNKLSF (74 aa)) is alpha C-terminal domain (alpha-CTD).

This sequence belongs to the RNA polymerase alpha chain family. In plastids the minimal PEP RNA polymerase catalytic core is composed of four subunits: alpha, beta, beta', and beta''. When a (nuclear-encoded) sigma factor is associated with the core the holoenzyme is formed, which can initiate transcription.

It is found in the plastid. Its subcellular location is the chloroplast. The catalysed reaction is RNA(n) + a ribonucleoside 5'-triphosphate = RNA(n+1) + diphosphate. In terms of biological role, DNA-dependent RNA polymerase catalyzes the transcription of DNA into RNA using the four ribonucleoside triphosphates as substrates. In Psathyrostachys juncea (Russian wildrye), this protein is DNA-directed RNA polymerase subunit alpha.